A 175-amino-acid polypeptide reads, in one-letter code: MAFEDLLNDPVIQKYLHELVGPTGMPVAAAPPDGEVTDEELAEELGLELNDVRRALFILYENDLASYRRLRDEDSGWLTYLWTFQYENIPEQLEEEMHRLLEALENRRQYESENEFYLCGECQLRFEFDEAMEFGFECPECGGRLESMENDRLVNAMEQHIEALRDELHVETAEA.

The 83-residue stretch at 8 to 90 folds into the HTH TFE/IIEalpha-type domain; sequence NDPVIQKYLH…LWTFQYENIP (83 aa).

This sequence belongs to the TFE family. In terms of assembly, monomer. Interaction with RNA polymerase subunits RpoF and RpoE is necessary for Tfe stimulatory transcription activity. Able to interact with Tbp and RNA polymerase in the absence of DNA promoter. Interacts both with the preinitiation and elongation complexes.

Transcription factor that plays a role in the activation of archaeal genes transcribed by RNA polymerase. Facilitates transcription initiation by enhancing TATA-box recognition by TATA-box-binding protein (Tbp), and transcription factor B (Tfb) and RNA polymerase recruitment. Not absolutely required for transcription in vitro, but particularly important in cases where Tbp or Tfb function is not optimal. It dynamically alters the nucleic acid-binding properties of RNA polymerases by stabilizing the initiation complex and destabilizing elongation complexes. Seems to translocate with the RNA polymerase following initiation and acts by binding to the non template strand of the transcription bubble in elongation complexes. The sequence is that of Transcription factor E from Natronomonas pharaonis (strain ATCC 35678 / DSM 2160 / CIP 103997 / JCM 8858 / NBRC 14720 / NCIMB 2260 / Gabara) (Halobacterium pharaonis).